The following is a 293-amino-acid chain: N-acetylmannosamine kinase (293 aa).

Residues 5 to 12 (AIDIGGTK) and 133 to 140 (GVGGGLVI) contribute to the ATP site. Zn(2+)-binding residues include His157, Cys167, Cys169, and Cys174.

The protein belongs to the ROK (NagC/XylR) family. NanK subfamily. Homodimer.

The catalysed reaction is an N-acyl-D-mannosamine + ATP = an N-acyl-D-mannosamine 6-phosphate + ADP + H(+). It functions in the pathway amino-sugar metabolism; N-acetylneuraminate degradation; D-fructose 6-phosphate from N-acetylneuraminate: step 2/5. In terms of biological role, catalyzes the phosphorylation of N-acetylmannosamine (ManNAc) to ManNAc-6-P. This is N-acetylmannosamine kinase from Vibrio vulnificus (strain CMCP6).